We begin with the raw amino-acid sequence, 424 residues long: Histidine--tRNA ligase (424 aa).

The protein belongs to the class-II aminoacyl-tRNA synthetase family. As to quaternary structure, homodimer.

It is found in the cytoplasm. It carries out the reaction tRNA(His) + L-histidine + ATP = L-histidyl-tRNA(His) + AMP + diphosphate + H(+). This is Histidine--tRNA ligase from Staphylococcus epidermidis (strain ATCC 12228 / FDA PCI 1200).